Reading from the N-terminus, the 463-residue chain is Cysteine--tRNA ligase (463 aa).

Cysteine 29 contributes to the Zn(2+) binding site. The short motif at 31-41 (PTVYDFAHIGN) is the 'HIGH' region element. 3 residues coordinate Zn(2+): cysteine 227, histidine 252, and glutamate 256. A 'KMSKS' region motif is present at residues 285–289 (KMSKS). Lysine 288 contributes to the ATP binding site.

Belongs to the class-I aminoacyl-tRNA synthetase family. In terms of assembly, monomer. Requires Zn(2+) as cofactor.

It localises to the cytoplasm. It carries out the reaction tRNA(Cys) + L-cysteine + ATP = L-cysteinyl-tRNA(Cys) + AMP + diphosphate. The sequence is that of Cysteine--tRNA ligase from Rhodopseudomonas palustris (strain BisA53).